We begin with the raw amino-acid sequence, 331 residues long: Putative lipoprotein YerB (331 aa).

Positions 1–19 (MKKWMTVCALCFVFFLLVS) are cleaved as a signal peptide. Cys20 carries N-palmitoyl cysteine lipidation. Cys20 is lipidated: S-diacylglycerol cysteine. Thr97 carries the phosphothreonine modification. A Phosphoserine modification is found at Ser103.

Interacts with PcrA. The interaction is not essential for cell viability or repair of UV-induced lesions.

It localises to the cell membrane. The sequence is that of Putative lipoprotein YerB (yerB) from Bacillus subtilis (strain 168).